A 384-amino-acid chain; its full sequence is 1-deoxy-D-xylulose 5-phosphate reductoisomerase (384 aa).

NADPH-binding residues include T10, G11, S12, I13, G36, K37, N38, and N121. K122 provides a ligand contact to 1-deoxy-D-xylulose 5-phosphate. E123 is a binding site for NADPH. D147 serves as a coordination point for Mn(2+). S148, E149, S173, and H196 together coordinate 1-deoxy-D-xylulose 5-phosphate. Position 149 (E149) interacts with Mn(2+). G202 provides a ligand contact to NADPH. 1-deoxy-D-xylulose 5-phosphate contacts are provided by S209, N214, K215, and E218. Residue E218 participates in Mn(2+) binding.

It belongs to the DXR family. Requires Mg(2+) as cofactor. It depends on Mn(2+) as a cofactor.

The enzyme catalyses 2-C-methyl-D-erythritol 4-phosphate + NADP(+) = 1-deoxy-D-xylulose 5-phosphate + NADPH + H(+). It participates in isoprenoid biosynthesis; isopentenyl diphosphate biosynthesis via DXP pathway; isopentenyl diphosphate from 1-deoxy-D-xylulose 5-phosphate: step 1/6. Functionally, catalyzes the NADPH-dependent rearrangement and reduction of 1-deoxy-D-xylulose-5-phosphate (DXP) to 2-C-methyl-D-erythritol 4-phosphate (MEP). The protein is 1-deoxy-D-xylulose 5-phosphate reductoisomerase of Exiguobacterium sibiricum (strain DSM 17290 / CCUG 55495 / CIP 109462 / JCM 13490 / 255-15).